A 382-amino-acid polypeptide reads, in one-letter code: Lipoyl synthase, mitochondrial (382 aa).

The transit peptide at 1 to 30 (MHGRRHLAASLARALTYAPSRSISSTPSLL) directs the protein to the mitochondrion. Positions 25–34 (STPSLLQTLD) are enriched in polar residues. Residues 25-47 (STPSLLQTLDPSTPSPAAAPPTA) form a disordered region. Positions 112, 117, 123, 143, 147, 150, and 359 each coordinate [4Fe-4S] cluster. One can recognise a Radical SAM core domain in the interval 128–348 (ETGTATATIM…RSLGVDMGFR (221 aa)).

The protein belongs to the radical SAM superfamily. Lipoyl synthase family. Requires [4Fe-4S] cluster as cofactor.

Its subcellular location is the mitochondrion. It catalyses the reaction [[Fe-S] cluster scaffold protein carrying a second [4Fe-4S](2+) cluster] + N(6)-octanoyl-L-lysyl-[protein] + 2 oxidized [2Fe-2S]-[ferredoxin] + 2 S-adenosyl-L-methionine + 4 H(+) = [[Fe-S] cluster scaffold protein] + N(6)-[(R)-dihydrolipoyl]-L-lysyl-[protein] + 4 Fe(3+) + 2 hydrogen sulfide + 2 5'-deoxyadenosine + 2 L-methionine + 2 reduced [2Fe-2S]-[ferredoxin]. It functions in the pathway protein modification; protein lipoylation via endogenous pathway; protein N(6)-(lipoyl)lysine from octanoyl-[acyl-carrier-protein]: step 2/2. In terms of biological role, catalyzes the radical-mediated insertion of two sulfur atoms into the C-6 and C-8 positions of the octanoyl moiety bound to the lipoyl domains of lipoate-dependent enzymes, thereby converting the octanoylated domains into lipoylated derivatives. The sequence is that of Lipoyl synthase, mitochondrial from Oryza sativa subsp. indica (Rice).